A 455-amino-acid polypeptide reads, in one-letter code: SVGFKAGVKDYKLTYYTPDYETKDTDILAAFRVTPQPGVPPEEAGAAVAAESSTGTWTTVWTDGLTSLDRYKGRCYHIEPVAGEENQFIAYVAYPLDLFEEGSVTNMFTSIVGNVFGFKALRALRLEDLRIPNAYVKTFQGPPHGIQVERDKLNKYGRPLLGCTIKPKLGLSAKNYGRAVYECLRGGLDFTKDDENVNSQPFMRWRDRFLFCAEALYKAQAETGEIKGHYLNATAGTCEEMIKRAVFARELGVPIVMHDYLTGGFTANTSLAHYCRDNGLLLHIHRAMHAVIDRQKNHGMHFRVLAKALRLSGGDHIHSGTVVGKLEGEREITLGFVDLLRDDFVEKDRSRGIYFTQDWVSLPGVLPVASGGIHVWHMPALTEIFGDDSVLQFGGGTLGHPWGNAPGAVANRVALEACVQARNEGRDLASEGNQIIREASKWSPELAAACEVWKE.

Residue lysine 5 is modified to N6,N6,N6-trimethyllysine. Residues asparagine 114 and threonine 164 each contribute to the substrate site. Lysine 166 functions as the Proton acceptor in the catalytic mechanism. Lysine 168 contributes to the substrate binding site. Positions 192, 194, and 195 each coordinate Mg(2+). N6-carboxylysine is present on lysine 192. Histidine 285 (proton acceptor) is an active-site residue. Arginine 286, histidine 318, and serine 370 together coordinate substrate.

The protein belongs to the RuBisCO large chain family. Type I subfamily. Heterohexadecamer of 8 large chains and 8 small chains; disulfide-linked. The disulfide link is formed within the large subunit homodimers. It depends on Mg(2+) as a cofactor. In terms of processing, the disulfide bond which can form in the large chain dimeric partners within the hexadecamer appears to be associated with oxidative stress and protein turnover.

The protein resides in the plastid. The protein localises to the chloroplast. The catalysed reaction is 2 (2R)-3-phosphoglycerate + 2 H(+) = D-ribulose 1,5-bisphosphate + CO2 + H2O. It carries out the reaction D-ribulose 1,5-bisphosphate + O2 = 2-phosphoglycolate + (2R)-3-phosphoglycerate + 2 H(+). Functionally, ruBisCO catalyzes two reactions: the carboxylation of D-ribulose 1,5-bisphosphate, the primary event in carbon dioxide fixation, as well as the oxidative fragmentation of the pentose substrate in the photorespiration process. Both reactions occur simultaneously and in competition at the same active site. In Lupinus albus (White lupine), this protein is Ribulose bisphosphate carboxylase large chain.